The sequence spans 225 residues: 2-C-methyl-D-erythritol 4-phosphate cytidylyltransferase (225 aa).

This sequence belongs to the IspD/TarI cytidylyltransferase family. IspD subfamily.

The enzyme catalyses 2-C-methyl-D-erythritol 4-phosphate + CTP + H(+) = 4-CDP-2-C-methyl-D-erythritol + diphosphate. It participates in isoprenoid biosynthesis; isopentenyl diphosphate biosynthesis via DXP pathway; isopentenyl diphosphate from 1-deoxy-D-xylulose 5-phosphate: step 2/6. In terms of biological role, catalyzes the formation of 4-diphosphocytidyl-2-C-methyl-D-erythritol from CTP and 2-C-methyl-D-erythritol 4-phosphate (MEP). The polypeptide is 2-C-methyl-D-erythritol 4-phosphate cytidylyltransferase (Clostridium perfringens (strain SM101 / Type A)).